Reading from the N-terminus, the 506-residue chain is Glutamate--tRNA ligase (506 aa).

The 'HIGH' region motif lies at 21–31; the sequence is PSPTGIPHVGM. Residues 265–269 carry the 'KMSKS' region motif; that stretch reads KLSKR. ATP is bound at residue Lys268.

The protein belongs to the class-I aminoacyl-tRNA synthetase family. Glutamate--tRNA ligase type 1 subfamily. As to quaternary structure, monomer.

The protein localises to the cytoplasm. It catalyses the reaction tRNA(Glu) + L-glutamate + ATP = L-glutamyl-tRNA(Glu) + AMP + diphosphate. Catalyzes the attachment of glutamate to tRNA(Glu) in a two-step reaction: glutamate is first activated by ATP to form Glu-AMP and then transferred to the acceptor end of tRNA(Glu). This chain is Glutamate--tRNA ligase, found in Bifidobacterium adolescentis (strain ATCC 15703 / DSM 20083 / NCTC 11814 / E194a).